The primary structure comprises 331 residues: Phosphoenolpyruvate transferase (331 aa).

Residue Asp63 coordinates 7,8-didemethyl-8-hydroxy-5-deazariboflavin.

This sequence belongs to the CofD family. Homodimer. It depends on Mg(2+) as a cofactor.

It carries out the reaction enolpyruvoyl-2-diphospho-5'-guanosine + 7,8-didemethyl-8-hydroxy-5-deazariboflavin = dehydro coenzyme F420-0 + GMP + H(+). It functions in the pathway cofactor biosynthesis; coenzyme F420 biosynthesis. In terms of biological role, catalyzes the transfer of the phosphoenolpyruvate moiety from enoylpyruvoyl-2-diphospho-5'-guanosine (EPPG) to 7,8-didemethyl-8-hydroxy-5-deazariboflavin (FO) with the formation of dehydro coenzyme F420-0 and GMP. The protein is Phosphoenolpyruvate transferase of Mycobacterium bovis (strain ATCC BAA-935 / AF2122/97).